The primary structure comprises 444 residues: MAVTTRLTWLHEKILQNHFGGKRLSLLYKGSVHGFHNGVLLDRCCNQGPTLTVIYSEDHIIGAYAEEGYQERKYASIILFALQETKISEWKLGLYTPETLFCCDVAKYNSPTNFQIDGRNRKVIMDLKTMENLGLAQNCTISIQDYEVFRCEDSLDERKIKGVIELRKSLLSALRTYEPYGSLVQQIRILLLGPIGAGKSSFFNSVRSVFQGHVTHQALVGTNTTGISEKYRTYSIRDGKDGKYLPFILCDSLGLSEKEGGLCMDDISYILNGNIRDRYQFNPMESIKLNHHDYIDSPSLKDRIHCVAFVFDASSIEYFSSQMIVKIKRIRRELVNAGVVHVALLTHVDSMDLITKGDLIEIERCVPVRSKLEEVQRKLGFALSDISVVSNYSSEWELDPVKDVLILSALRRMLWAADDFLEDLPFEQIGNLREEIINCAQGKK.

In terms of domain architecture, TLDc spans 1 to 152 (MAVTTRLTWL…IQDYEVFRCE (152 aa)).

It belongs to the IFI44 family. In terms of tissue distribution, hepatocytes.

The protein resides in the cytoplasm. In terms of biological role, this protein aggregates to form microtubular structures. The protein is Interferon-induced protein 44 (IFI44) of Pan troglodytes (Chimpanzee).